Reading from the N-terminus, the 242-residue chain is MAFVVIPSVDVVEGKCVQLVEGDPERRTFESDDPVETAHQWSEFFPWIHVVDVDAARGEGDNSDIIGRICEEVDAKVQVGGGIRSAERAEELIELGADRLIVGTVAFTDKDDFSKIVDVCHDHGIEVFVALDVNENHEVLVSGWKEDAGVTLEDAIERFNEVADGYLTTAVHVEGKEMGIDEKVVEKSTGATDLPVLYAGGIASIKDVKRAKEAGAYGVVIGTALYHGDIDPVALLDLMEED.

Asp-10 serves as the catalytic Proton acceptor. Asp-132 functions as the Proton donor in the catalytic mechanism.

It belongs to the HisA/HisF family.

The protein resides in the cytoplasm. It catalyses the reaction 1-(5-phospho-beta-D-ribosyl)-5-[(5-phospho-beta-D-ribosylamino)methylideneamino]imidazole-4-carboxamide = 5-[(5-phospho-1-deoxy-D-ribulos-1-ylimino)methylamino]-1-(5-phospho-beta-D-ribosyl)imidazole-4-carboxamide. It participates in amino-acid biosynthesis; L-histidine biosynthesis; L-histidine from 5-phospho-alpha-D-ribose 1-diphosphate: step 4/9. The protein is 1-(5-phosphoribosyl)-5-[(5-phosphoribosylamino)methylideneamino] imidazole-4-carboxamide isomerase of Methanopyrus kandleri (strain AV19 / DSM 6324 / JCM 9639 / NBRC 100938).